The chain runs to 551 residues: Endolytic murein transglycosylase (551 aa).

Residues 1–187 (MSEKSREEEK…PKKEKKSHVK (187 aa)) are Cytoplasmic-facing. Residues 38 to 180 (VRTPANEPSA…EGAKPAKPKK (143 aa)) are disordered. 2 stretches are compositionally biased toward low complexity: residues 100-110 (PSSPAEESGSR) and 145-157 (QAGPETPTPATET). Residues 159-174 (DIIRDTSRRSRREGAK) show a composition bias toward basic and acidic residues. A helical transmembrane segment spans residues 188–208 (AFVISFLVFLALLSAGGYFGY). Topologically, residues 209–551 (QYVLDSLLPI…VAEHVNSKLN (343 aa)) are extracellular.

This sequence belongs to the transglycosylase MltG family.

The protein localises to the cell membrane. The enzyme catalyses a peptidoglycan chain = a peptidoglycan chain with N-acetyl-1,6-anhydromuramyl-[peptide] at the reducing end + a peptidoglycan chain with N-acetylglucosamine at the non-reducing end.. In terms of biological role, functions as a peptidoglycan terminase that cleaves nascent peptidoglycan strands endolytically to terminate their elongation. Involved in peripheral peptidoglycan (PG) synthesis. This Streptococcus pneumoniae serotype 2 (strain D39 / NCTC 7466) protein is Endolytic murein transglycosylase.